Consider the following 380-residue polypeptide: MPIKSFASRLALSLAICGTAMGQKVNGADYNKPDGGPPAKFFQASSSIPVAAIQAAAAKASKVPSHATYPIGQGSTKSTIHSDWAGFSEGAAFSFIADMDVDCDGLNHGCKGNPDGQKETNWGALSAYEVPFIVIPQEFLDANKGTLKGNAVAAVICNGKMFYGIFGDSNGDSPQVTGEASWLMARTCFPKEDLNGNKGHTAADVTYIVFTGDKAVLPSSALNKNYITNFDTLRSMGDSLVGALAKNLNLGGGGGNPPTTLTTTSIPEPTGGSGSCSWPGHCAGATCSSNDDCSDDLTCQNGKCASDGSAETCSWEGHCKGATCSSNDDCSDELACISGICSVDNGVETCEWEGHCEGASCSSHDDCDGNLACKNGKCSA.

Positions 1–22 are cleaved as a signal peptide; that stretch reads MPIKSFASRLALSLAICGTAMG. The stretch at 276–304 is one R3-1 repeat; sequence CSWPGHCAGATCSSNDDCSDDLTCQNGKC. One copy of the R3-2 repeat lies at 311 to 341; the sequence is ETCSWEGHCKGATCSSNDDCSDELACISGIC. The stretch at 348-378 is one R3-3 repeat; sequence ETCEWEGHCEGASCSSHDDCDGNLACKNGKC.

Belongs to the glycosyl hydrolase 75 family.

Its subcellular location is the secreted. It carries out the reaction Endohydrolysis of beta-(1-&gt;4)-linkages between D-glucosamine residues in a partly acetylated chitosan.. Chitosanase catalyzing the endo-type cleavage of chitosan, the deacylated form of chitin. Chitosanase may be crucial in the degradation of the deacetylated portion of chitin in the fungal cell wall. Chitoolisaccharides produced by the hydrolysis of partially N-acetylated chitosan are known to have many biological activities, including antibacterial activity, immune-enhancing effects, and elicitor activity. This is Endo-chitosanase C (csnC) from Aspergillus oryzae (Yellow koji mold).